The primary structure comprises 726 residues: Type VI secretion system spike protein VgrG1c (726 aa).

Positions 502–522 (ANATQSGTKSRSSKGGTPANF) are disordered. Residues 507-518 (SGTKSRSSKGGT) are compositionally biased toward low complexity.

This sequence belongs to the VgrG protein family. As to quaternary structure, forms homomultimers. Part of the type VI secretion system (T6SS).

It localises to the secreted. In terms of biological role, part of the H1 type VI secretion system (H1-T6SS) specialized secretion system, which delivers several virulence factors in both prokaryotic and eukaryotic cells during infection. Allows the delivery of the Tse5/RhsP1 toxin to target cells where it exerts its toxicity. The polypeptide is Type VI secretion system spike protein VgrG1c (Pseudomonas aeruginosa (strain ATCC 15692 / DSM 22644 / CIP 104116 / JCM 14847 / LMG 12228 / 1C / PRS 101 / PAO1)).